The following is a 340-amino-acid chain: N-acetyl-gamma-glutamyl-phosphate reductase (340 aa).

Cys-146 is a catalytic residue.

The protein belongs to the NAGSA dehydrogenase family. Type 1 subfamily.

It is found in the cytoplasm. It carries out the reaction N-acetyl-L-glutamate 5-semialdehyde + phosphate + NADP(+) = N-acetyl-L-glutamyl 5-phosphate + NADPH + H(+). The protein operates within amino-acid biosynthesis; L-arginine biosynthesis; N(2)-acetyl-L-ornithine from L-glutamate: step 3/4. In terms of biological role, catalyzes the NADPH-dependent reduction of N-acetyl-5-glutamyl phosphate to yield N-acetyl-L-glutamate 5-semialdehyde. This chain is N-acetyl-gamma-glutamyl-phosphate reductase, found in Rubrobacter xylanophilus (strain DSM 9941 / JCM 11954 / NBRC 16129 / PRD-1).